The following is a 404-amino-acid chain: Probable protein phosphatase 2C 30 (404 aa).

The segment covering 42 to 52 (AERGAEEETSG) has biased composition (basic and acidic residues). The tract at residues 42 to 72 (AERGAEEETSGKRRRLDGGGGEASTDEEDRE) is disordered. The 323-residue stretch at 77–399 (RYGFTSVCGR…DNVSVVVVNL (323 aa)) folds into the PPM-type phosphatase domain. 3 residues coordinate Mn(2+): aspartate 111, glycine 112, and aspartate 298. The segment at 321–369 (GRRERNRSSPTSNLSPRQSSSSGDEAPNDGAPSAAAGSESDEESAAEED) is disordered. Over residues 330-343 (PTSNLSPRQSSSSG) the composition is skewed to polar residues. Residue aspartate 390 coordinates Mn(2+).

The protein belongs to the PP2C family. Interacts with PYL5 and SAPK2. Binding to PYL5 is dependent on the presence of abscisic acid (ABA). Interacts with PYL3, PYL5 and PYL9. Binding to PYL5 and PYL9 is dependent on the presence of ABA. It depends on Mg(2+) as a cofactor. The cofactor is Mn(2+).

It localises to the nucleus. The enzyme catalyses O-phospho-L-seryl-[protein] + H2O = L-seryl-[protein] + phosphate. The catalysed reaction is O-phospho-L-threonyl-[protein] + H2O = L-threonyl-[protein] + phosphate. In terms of biological role, together with ABI5, PYL5 and SAPK2, is part of an abscisic acid (ABA) signaling unit that modulates seed germination and early seedling growth. In Oryza sativa subsp. japonica (Rice), this protein is Probable protein phosphatase 2C 30.